The chain runs to 143 residues: Sarcoplasmic/endoplasmic reticulum calcium ATPase (143 aa).

It belongs to the cation transport ATPase (P-type) (TC 3.A.3) family. Type IIA subfamily.

The protein resides in the endoplasmic reticulum membrane. It localises to the sarcoplasmic reticulum membrane. The catalysed reaction is Ca(2+)(in) + ATP + H2O = Ca(2+)(out) + ADP + phosphate + H(+). Its function is as follows. This magnesium-dependent enzyme catalyzes the hydrolysis of ATP coupled with the transport of calcium. Transports calcium ions from the cytosol into the sarcoplasmic/endoplasmic reticulum lumen. Contributes to calcium sequestration involved in muscular excitation/contraction. The protein is Sarcoplasmic/endoplasmic reticulum calcium ATPase of Chionoecetes opilio (Atlantic snow crab).